Here is a 186-residue protein sequence, read N- to C-terminus: Ribonuclease M5 (186 aa).

In terms of domain architecture, Toprim spans 6-89; the sequence is SQVIVVEGRD…AFLKRDEAVP (84 aa). Positions 12, 58, and 60 each coordinate Mg(2+).

Belongs to the ribonuclease M5 family. Requires Mg(2+) as cofactor.

The protein resides in the cytoplasm. It catalyses the reaction Endonucleolytic cleavage of RNA, removing 21 and 42 nucleotides, respectively, from the 5'- and 3'-termini of a 5S-rRNA precursor.. Functionally, required for correct processing of both the 5' and 3' ends of 5S rRNA precursor. Cleaves both sides of a double-stranded region yielding mature 5S rRNA in one step. This is Ribonuclease M5 from Streptococcus pneumoniae (strain ATCC BAA-255 / R6).